We begin with the raw amino-acid sequence, 874 residues long: Alanine--tRNA ligase (874 aa).

Residues H562, H566, C664, and H668 each contribute to the Zn(2+) site.

This sequence belongs to the class-II aminoacyl-tRNA synthetase family. Zn(2+) is required as a cofactor.

It is found in the cytoplasm. It carries out the reaction tRNA(Ala) + L-alanine + ATP = L-alanyl-tRNA(Ala) + AMP + diphosphate. Functionally, catalyzes the attachment of alanine to tRNA(Ala) in a two-step reaction: alanine is first activated by ATP to form Ala-AMP and then transferred to the acceptor end of tRNA(Ala). Also edits incorrectly charged Ser-tRNA(Ala) and Gly-tRNA(Ala) via its editing domain. This is Alanine--tRNA ligase from Neisseria gonorrhoeae (strain ATCC 700825 / FA 1090).